Reading from the N-terminus, the 649-residue chain is MGCAEGKAVAAAAPTELQTKGKNGDGRRRSAKDHHPGKTLPENPAGFTSTATADSRALLQAYIDGHSVVIFSRSTCTRCTEVKKLFKSLCVPYFVLELDQTEDGRALEGTLSELAAETDLPVVFVKQRKIGGHGPTLKAYQEGRLQKLLKMNGPEDLPKSYDYDLIIIGGGSGGLAAAKEAAQYGKKVMVLDFVTPTPLGTRWGLGGTCVNVGCIPKKLMHQAALLGQALQDSRNYGWKVEETVKHDWDRMIEAVQNHIGSLNWGYRVALREKKVVYENAYGQFIGPHRIKATNNKGKEKIYSAERFLIATGERPRYLGIPGDKEYCISSDDLFSLPYCPGKTLVVGASYVALECAGFLAGIGLDVTVMVRSILLRGFDQDMANKIGEHMEEHGIKFIRQFVPIKVEQIEAGTPGRLRVVAQSTNSEEIIEGEYNTVMLAIGRDACTRKIGLETVGVKINEKTGKIPVTDEEQTNVPYIYAIGDILEDKVELTPVAIQAGRLLAQRLYAGSTVKCDYENVPTTVFTPLEYGACGLSEEKAVEKFGEENIEVYHSYFWPLEWTIPSRDNNKCYAKIICNTKDNERVVGFHVLGPNAGEVTQGFAAALKCGLTKKQLDSTIGIHPVCAEVFTTLSVTKRSGASILQAGCUG.

Met1 bears the N-acetylmethionine mark. Positions Met1–Ser49 are disordered. A compositionally biased stretch (basic and acidic residues) spans Lys22–Pro36. Residues Arg56–Asp156 form the Glutaredoxin domain. The interval Leu145–Leu149 is required for interaction with ESR1 and ESR2. FAD contacts are provided by residues Ser172–Gly173, Asp192–Phe193, Thr208–Cys209, and Gly213–Lys217. Residues Cys209 and Cys214 are joined by a disulfide bond. Lys218 carries the post-translational modification N6-succinyllysine. Tyr281 is modified (phosphotyrosine). FAD contacts are provided by residues Tyr281–Gly282 and Thr311. NADP(+) contacts are provided by residues Arg316, Ala348–Glu354, Arg371–Ser372, Arg376, Arg376–Phe378, Gly442–Arg443, and Lys465. An FAD-binding site is contributed by Tyr350. Residues Asp484, Glu491–Thr493, and His622 each bind FAD. Residue Glu491 coordinates NADP(+). The active-site Proton acceptor is the His622. The cysteinyl-selenocysteine (Cys-Sec) cross-link spans Cys647 to Sec648. Position 648 (Sec648) is a non-standard amino acid, selenocysteine.

It belongs to the class-I pyridine nucleotide-disulfide oxidoreductase family. Homodimer. Interacts with HERC5. In terms of assembly, interacts with ESR1 and ESR2. It depends on FAD as a cofactor. In terms of processing, the N-terminus is blocked. ISGylated. As to expression, expressed predominantly in Leydig cells (at protein level). Also expressed in ovary, spleen, heart, liver, kidney and pancreas and in a number of cancer cell lines. Widely expressed with highest levels in kidney, testis, uterus, ovary, prostate, placenta and fetal liver.

The protein resides in the cytoplasm. It localises to the nucleus. It catalyses the reaction [thioredoxin]-dithiol + NADP(+) = [thioredoxin]-disulfide + NADPH + H(+). The catalysed reaction is H2O2 + NADPH + H(+) = NADP(+) + 2 H2O. Functionally, reduces disulfideprotein thioredoxin (Trx) to its dithiol-containing form. Homodimeric flavoprotein involved in the regulation of cellular redox reactions, growth and differentiation. Contains a selenocysteine residue at the C-terminal active site that is essential for catalysis. Also has reductase activity on hydrogen peroxide (H2O2). Its function is as follows. Induces actin and tubulin polymerization, leading to formation of cell membrane protrusions. Enhances the transcriptional activity of estrogen receptors ESR1 and ESR2. In terms of biological role, enhances the transcriptional activity of the estrogen receptor ESR2 only. Mediates cell death induced by a combination of interferon-beta and retinoic acid. The chain is Thioredoxin reductase 1, cytoplasmic from Homo sapiens (Human).